Consider the following 501-residue polypeptide: Phenylalanine--tRNA ligase alpha subunit (501 aa).

L-phenylalanine is bound by residues threonine 340 and phenylalanine 423. Glutamate 425 is a binding site for Mg(2+). Phenylalanine 448 is a binding site for L-phenylalanine.

The protein belongs to the class-II aminoacyl-tRNA synthetase family. Phe-tRNA synthetase alpha subunit type 2 subfamily. In terms of assembly, tetramer of two alpha and two beta subunits. Mg(2+) serves as cofactor.

It localises to the cytoplasm. It carries out the reaction tRNA(Phe) + L-phenylalanine + ATP = L-phenylalanyl-tRNA(Phe) + AMP + diphosphate + H(+). In Methanococcus vannielii (strain ATCC 35089 / DSM 1224 / JCM 13029 / OCM 148 / SB), this protein is Phenylalanine--tRNA ligase alpha subunit.